We begin with the raw amino-acid sequence, 475 residues long: Ribulose bisphosphate carboxylase large chain (475 aa).

The propeptide occupies 1-2 (MS). Position 3 is an N-acetylproline (proline 3). Lysine 14 carries the N6,N6,N6-trimethyllysine modification. Substrate-binding residues include asparagine 123 and threonine 173. Lysine 175 serves as the catalytic Proton acceptor. Residue lysine 177 participates in substrate binding. The Mg(2+) site is built by lysine 201, aspartate 203, and glutamate 204. Lysine 201 is modified (N6-carboxylysine). Residue histidine 294 is the Proton acceptor of the active site. Residues arginine 295, histidine 327, and serine 379 each contribute to the substrate site.

Belongs to the RuBisCO large chain family. Type I subfamily. In terms of assembly, heterohexadecamer of 8 large chains and 8 small chains. Mg(2+) serves as cofactor.

The protein resides in the plastid. It is found in the chloroplast. The enzyme catalyses 2 (2R)-3-phosphoglycerate + 2 H(+) = D-ribulose 1,5-bisphosphate + CO2 + H2O. The catalysed reaction is D-ribulose 1,5-bisphosphate + O2 = 2-phosphoglycolate + (2R)-3-phosphoglycerate + 2 H(+). RuBisCO catalyzes two reactions: the carboxylation of D-ribulose 1,5-bisphosphate, the primary event in carbon dioxide fixation, as well as the oxidative fragmentation of the pentose substrate in the photorespiration process. Both reactions occur simultaneously and in competition at the same active site. In Bazzania trilobata (Greater whipwort), this protein is Ribulose bisphosphate carboxylase large chain.